Reading from the N-terminus, the 372-residue chain is Pyruvylated Gal-beta-1,3-epitope synthesis protein 5 (372 aa).

Over 1-12 (MGLPLRIFAGNG) the chain is Cytoplasmic. The helical; Signal-anchor for type II membrane protein transmembrane segment at 13 to 35 (IGGWCLRLFLFGSLILLLRPLIF) threads the bilayer. The Lumenal portion of the chain corresponds to 36-372 (YSNTTMKKLK…LRIIEQWKQL (337 aa)). N38 and N128 each carry an N-linked (GlcNAc...) asparagine glycan.

The protein localises to the golgi apparatus membrane. Functionally, involved in cell wall biogenesis. Has a role in the addition of Gal-beta1,3 moeities to galactomannans and their subsequent pyruvylation. Has a role in meiosis. This Schizosaccharomyces pombe (strain 972 / ATCC 24843) (Fission yeast) protein is Pyruvylated Gal-beta-1,3-epitope synthesis protein 5 (pvg5).